Consider the following 36-residue polypeptide: Glucagon (36 aa).

Belongs to the glucagon family. As to expression, produced by the X-cells of the islets of pancreas.

The protein resides in the secreted. Functionally, promotes hydrolysis of glycogen and lipids, and raises the blood sugar level. This is Glucagon (gcg) from Hydrolagus colliei (Spotted ratfish).